The primary structure comprises 99 residues: MSTILVLGGSNGRTLEKLAKKRDCQVIFHDGKNHGGVKKTFRSVIKKCDVIVVQKGACGHVSIDVAKEYAKKYDVPLLFNQGFGGTGALEIGLKHLQAA.

This sequence belongs to the UPF0751 family.

This Bacillus cereus (strain AH820) protein is UPF0751 protein BCAH820_B0138.